Here is a 391-residue protein sequence, read N- to C-terminus: Rhizopuspepsin-3 (391 aa).

The first 21 residues, 1–21, serve as a signal peptide directing secretion; sequence MKFTLISSCVTLALMTLSIEA. Positions 22 to 68 are cleaved as a propeptide — activation peptide; that stretch reads APSGKKVNIPLTKNKDYKPNAKNAIQKAIAKYHRHRSVSSSNSTSTD. The 305-residue stretch at 84-388 folds into the Peptidase A1 domain; that stretch reads YYGEVTVGTP…NPEVPHVQIA (305 aa). Aspartate 102 is a catalytic residue. Cysteine 115 and cysteine 118 are joined by a disulfide. The active site involves aspartate 285. Residues cysteine 319 and cysteine 352 are joined by a disulfide bond.

It belongs to the peptidase A1 family.

The catalysed reaction is Hydrolysis of proteins with broad specificity similar to that of pepsin A, preferring hydrophobic residues at P1 and P1'. Clots milk and activates trypsinogen. Does not cleave 4-Gln-|-His-5, but does cleave 10-His-|-Leu-11 and 12-Val-|-Glu-13 in B chain of insulin.. This is Rhizopuspepsin-3 from Rhizopus niveus.